A 491-amino-acid polypeptide reads, in one-letter code: V-type proton ATPase subunit B 1 (491 aa).

Residue R380 coordinates ATP.

The protein belongs to the ATPase alpha/beta chains family. V-ATPase is a heteromultimeric enzyme made up of two complexes: the ATP-hydrolytic V1 complex and the proton translocation V0 complex. The V1 complex consists of three catalytic AB heterodimers that form a heterohexamer, three peripheral stalks each consisting of EG heterodimers, one central rotor including subunits D and F, and the regulatory subunits C and H. The proton translocation complex V0 consists of the proton transport subunit a, a ring of proteolipid subunits c9c'', rotary subunit d, subunits e and f, and the accessory subunits vah-19/Ac45 and vah-20/PRR. As to expression, expressed ubiquitously. Highly expressed in the H-shaped excretory cell, the excretory pore, the intestine, and hypodermal cells. Expressed in the nervous system. Expressed at low levels in muscles.

Non-catalytic subunit of the V1 complex of vacuolar(H+)-ATPase (V-ATPase), a multisubunit enzyme composed of a peripheral complex (V1) that hydrolyzes ATP and a membrane integral complex (V0) that translocates protons. V-ATPase is responsible for acidifying and maintaining the pH of intracellular compartments and in some cell types, is targeted to the plasma membrane, where it is responsible for acidifying the extracellular environment. Essential for the proper assembly and activity of V-ATPase. Required maternally for early embryogenesis and zygotically during morphogenesis. Specifically, involved in the clearance of apoptotic cell corpses in embryos. Also, during embryonic development, the V-ATPase is required to repress fusion of epidermal cells probably by negatively regulating eff-1-mediated cell fusion. In neurons, required for necrotic cell death by promoting intracellular acidification. Required for cell death induced by hypoxia. Required for acidification of synaptic vesicles and the release of neurotransmitters from adult neurons. The sequence is that of V-type proton ATPase subunit B 1 from Caenorhabditis elegans.